The following is a 429-amino-acid chain: S-adenosylmethionine synthase (429 aa).

Mg(2+) is bound at residue glutamate 9. Residue histidine 15 coordinates ATP. A K(+)-binding site is contributed by glutamate 43. L-methionine is bound by residues glutamate 56 and glutamine 99. ATP is bound by residues 167-169 (DGK), 235-238 (SGRF), aspartate 246, 252-253 (RK), alanine 269, lysine 273, and lysine 277. Aspartate 246 contacts L-methionine. Residue lysine 277 participates in L-methionine binding.

Belongs to the AdoMet synthase family. Homotetramer. It depends on Mn(2+) as a cofactor. The cofactor is Mg(2+). Co(2+) serves as cofactor. K(+) is required as a cofactor.

The protein resides in the cytoplasm. It catalyses the reaction L-methionine + ATP + H2O = S-adenosyl-L-methionine + phosphate + diphosphate. It functions in the pathway amino-acid biosynthesis; S-adenosyl-L-methionine biosynthesis; S-adenosyl-L-methionine from L-methionine: step 1/1. Functionally, catalyzes the formation of S-adenosylmethionine from methionine and ATP. The reaction comprises two steps that are both catalyzed by the same enzyme: formation of S-adenosylmethionine (AdoMet) and triphosphate, and subsequent hydrolysis of the triphosphate. This is S-adenosylmethionine synthase (SAMS) from Carica papaya (Papaya).